The following is a 64-amino-acid chain: Conotoxin reg3.16 (64 aa).

The signal sequence occupies residues 1-19; it reads MSKLGVFLTICLLLFPLTA. Residues 20 to 49 constitute a propeptide that is removed on maturation; sequence LQLDGDQPADKPAQRKLKILPKRKHWTRFT. Intrachain disulfides connect Cys-50–Cys-64, Cys-51–Cys-60, and Cys-56–Cys-63.

It belongs to the conotoxin M superfamily. As to expression, expressed by the venom duct.

Its subcellular location is the secreted. This chain is Conotoxin reg3.16, found in Conus regius (Crown cone).